The following is a 467-amino-acid chain: MRGGSSDAERRQRWGRLFEELDSNKDGRVDVHELRQGLARLGRGDPDRAQQGVSSDWDADPDGGLSLEEFTRYLQEREQRLLLMFHSLDRNQDGHIDVSEIQQSFRALGISISLEQAEKILHSMDRDGTMTIDWQEWRDHFLLHSLENVEDVLYFWKHSTVLDIGECLTVPDEFSQEEKLTGMWWKQLVAGAVAGAVSRTGTAPLDRLKVFMQVHASKSNRLNILGGLRNMIQEGGVLSLWRGNGINVLKIAPESAIKFMAYEQIKRAIRGQQETLHVQERFVAGSLAGATAQTIIYPMEVLKTRLTLRRTGQYKGLLDCAKRILEREGPRAFYRGYLPNVLGIIPYAGIDLAVYETLKNRWLQQYSHESANPGILVLLGCGTISSTCGQIASYPLALVRTRMQAQASIEGGPQVSMVGLLRHILSQEGVWGLYRGIAPNFMKVIPAVSISYVVYENMKQALGVTSR.

Positions 1–148 (MRGGSSDAER…DHFLLHSLEN (148 aa)) are regulatory N-terminal domain. Residues 1–187 (MRGGSSDAER…EKLTGMWWKQ (187 aa)) lie on the Mitochondrial intermembrane side of the membrane. EF-hand domains follow at residues 9–44 (ERRQ…LGRG), 76–111 (EREQ…LGIS), and 112–147 (ISLE…HSLE). Positions 22, 24, 26, 28, and 33 each coordinate Ca(2+). A disordered region spans residues 39-61 (ARLGRGDPDRAQQGVSSDWDADP). The Ca(2+) site is built by Asp-89, Asn-91, Asp-93, His-95, and Glu-100. The linker region stretch occupies residues 149–158 (VEDVLYFWKH). Residues 164–467 (IGECLTVPDE…MKQALGVTSR (304 aa)) are C-terminal transmembrane transporter domain. 3 Solcar repeats span residues 182–268 (GMWW…IKRA), 276–361 (LHVQ…LKNR), and 373–461 (PGIL…MKQA). Residues 188-205 (LVAGAVAGAVSRTGTAPL) form a helical membrane-spanning segment. Residues 206 to 242 (DRLKVFMQVHASKSNRLNILGGLRNMIQEGGVLSLWR) lie on the Mitochondrial matrix side of the membrane. The chain crosses the membrane as a helical span at residues 243-262 (GNGINVLKIAPESAIKFMAY). Residues 263–285 (EQIKRAIRGQQETLHVQERFVAG) lie on the Mitochondrial intermembrane side of the membrane. A helical transmembrane segment spans residues 286 to 299 (SLAGATAQTIIYPM). The Mitochondrial matrix segment spans residues 300–335 (EVLKTRLTLRRTGQYKGLLDCAKRILEREGPRAFYR). A helical membrane pass occupies residues 336–355 (GYLPNVLGIIPYAGIDLAVY). The Mitochondrial intermembrane segment spans residues 356-378 (ETLKNRWLQQYSHESANPGILVL). A helical membrane pass occupies residues 379 to 396 (LGCGTISSTCGQIASYPL). The Mitochondrial matrix segment spans residues 397–435 (ALVRTRMQAQASIEGGPQVSMVGLLRHILSQEGVWGLYR). A helical transmembrane segment spans residues 436-455 (GIAPNFMKVIPAVSISYVVY). Topologically, residues 456–467 (ENMKQALGVTSR) are mitochondrial intermembrane.

It belongs to the mitochondrial carrier (TC 2.A.29) family. In terms of assembly, interacts with MCU. Interacts with MICU1.

It localises to the mitochondrion inner membrane. The enzyme catalyses Mg(2+)(out) + phosphate(in) + ATP(out) = Mg(2+)(in) + phosphate(out) + ATP(in). It catalyses the reaction ADP(out) + phosphate(in) + H(+)(out) = ADP(in) + phosphate(out) + H(+)(in). The catalysed reaction is AMP(out) + phosphate(in) = AMP(in) + phosphate(out). It carries out the reaction phosphate(in) + ATP(out) + 2 H(+)(out) = phosphate(out) + ATP(in) + 2 H(+)(in). The enzyme catalyses dADP(in) + ADP(out) = dADP(out) + ADP(in). It catalyses the reaction Mg(2+)(in) + ADP(out) + ATP(in) + H(+)(out) = Mg(2+)(out) + ADP(in) + ATP(out) + H(+)(in). The catalysed reaction is ADP(out) + diphosphate(in) = ADP(in) + diphosphate(out). It carries out the reaction dAMP(in) + ADP(out) + H(+)(out) = dAMP(out) + ADP(in) + H(+)(in). The enzyme catalyses 3'-AMP(in) + ADP(out) + H(+)(out) = 3'-AMP(out) + ADP(in) + H(+)(in). It catalyses the reaction dAMP(out) + phosphate(in) = dAMP(in) + phosphate(out). The catalysed reaction is 3'-AMP(out) + phosphate(in) = 3'-AMP(in) + phosphate(out). It carries out the reaction dADP(out) + phosphate(in) + H(+)(out) = dADP(in) + phosphate(out) + H(+)(in). With respect to regulation, activated by an increase in cytosolic calcium levels that induce a conformational change of the N-terminal regulatory domain, uncapping the channel and allowing transport. Its function is as follows. Electroneutral antiporter that mediates the transport of adenine nucleotides through the inner mitochondrial membrane. Originally identified as an ATP-magnesium/inorganic phosphate antiporter, it also acts as a broad specificity adenyl nucleotide antiporter. By regulating the mitochondrial matrix adenine nucleotide pool could adapt to changing cellular energetic demands and indirectly regulate adenine nucleotide-dependent metabolic pathways. Also acts as a regulator of mitochondrial calcium uptake and can probably transport trace amounts of other divalent metal cations in complex with ATP. In vitro, a low activity is also observed with guanyl and pyrimidine nucleotides. The sequence is that of Mitochondrial adenyl nucleotide antiporter SLC25A23 from Mus musculus (Mouse).